The primary structure comprises 218 residues: MTCVKICGLRRKEDIDYVNLYKPQFAGFVFAESRRKVSKETARMLVKALLPQIKSVGIFVNEKKETVAEIVKYTGLDCVQLHGDETPEYVEKLKELLGRITEKRIEIWKAVRVKNKESLEIISEFDVDAFLLDAYVEGSYGGAGAVFDWQLAADVAAGHERIILAGGLNPENVKTAVAKVKPYGVDVSSGVETDGFKDAEKIRDFIMKVREADGGVLS.

Belongs to the TrpF family.

The catalysed reaction is N-(5-phospho-beta-D-ribosyl)anthranilate = 1-(2-carboxyphenylamino)-1-deoxy-D-ribulose 5-phosphate. Its pathway is amino-acid biosynthesis; L-tryptophan biosynthesis; L-tryptophan from chorismate: step 3/5. This is N-(5'-phosphoribosyl)anthranilate isomerase from Acetivibrio thermocellus (strain ATCC 27405 / DSM 1237 / JCM 9322 / NBRC 103400 / NCIMB 10682 / NRRL B-4536 / VPI 7372) (Clostridium thermocellum).